Reading from the N-terminus, the 405-residue chain is Acetylornithine aminotransferase 2 (405 aa).

Residues 105-106 and Phe-138 contribute to the pyridoxal 5'-phosphate site; that span reads GT. Residue Arg-141 participates in N(2)-acetyl-L-ornithine binding. 224-227 provides a ligand contact to pyridoxal 5'-phosphate; the sequence is DEVQ. Lys-254 carries the N6-(pyridoxal phosphate)lysine modification. Ser-282 provides a ligand contact to N(2)-acetyl-L-ornithine. Thr-283 is a binding site for pyridoxal 5'-phosphate.

The protein belongs to the class-III pyridoxal-phosphate-dependent aminotransferase family. ArgD subfamily. In terms of assembly, homodimer. Pyridoxal 5'-phosphate is required as a cofactor.

It is found in the cytoplasm. It carries out the reaction N(2)-acetyl-L-ornithine + 2-oxoglutarate = N-acetyl-L-glutamate 5-semialdehyde + L-glutamate. It participates in amino-acid biosynthesis; L-arginine biosynthesis; N(2)-acetyl-L-ornithine from L-glutamate: step 4/4. The chain is Acetylornithine aminotransferase 2 from Caulobacter vibrioides (strain ATCC 19089 / CIP 103742 / CB 15) (Caulobacter crescentus).